A 311-amino-acid polypeptide reads, in one-letter code: Sulfate adenylyltransferase subunit 2 (311 aa).

It belongs to the PAPS reductase family. CysD subfamily. Heterodimer composed of CysD, the smaller subunit, and CysN.

It catalyses the reaction sulfate + ATP + H(+) = adenosine 5'-phosphosulfate + diphosphate. The protein operates within sulfur metabolism; hydrogen sulfide biosynthesis; sulfite from sulfate: step 1/3. Its function is as follows. With CysN forms the ATP sulfurylase (ATPS) that catalyzes the adenylation of sulfate producing adenosine 5'-phosphosulfate (APS) and diphosphate, the first enzymatic step in sulfur assimilation pathway. APS synthesis involves the formation of a high-energy phosphoric-sulfuric acid anhydride bond driven by GTP hydrolysis by CysN coupled to ATP hydrolysis by CysD. In Caulobacter vibrioides (strain ATCC 19089 / CIP 103742 / CB 15) (Caulobacter crescentus), this protein is Sulfate adenylyltransferase subunit 2.